Here is a 266-residue protein sequence, read N- to C-terminus: MIAMNTPDFQRMKKDNKKISMVTCYDYWSACIISQSNVDCILVGDSLAMVMYGHSTTLPATVEIMAQHIQAVSRGAPNKFIIGDMPFCSYRKDLTTSMNAVERLMQAGAQAIKLEGADAHNLKFIHHVVKSGIPVIGHLGLTPQSIYTLGGFKVQGKEPSAAKKLMADAKALAETGCFAMVLECVPSELAELITHSISIPTIGIGAGPATSGQVLVLQDLLGTNNQFQPKYLKKFLNGFELIKKALDDFDQEVKTSTYPHLETHCY.

Mg(2+)-binding residues include aspartate 45 and aspartate 84. 3-methyl-2-oxobutanoate-binding positions include 45–46 (DS), aspartate 84, and lysine 113. Glutamate 115 contributes to the Mg(2+) binding site. Catalysis depends on glutamate 183, which acts as the Proton acceptor.

This sequence belongs to the PanB family. Homodecamer; pentamer of dimers. Mg(2+) serves as cofactor.

Its subcellular location is the cytoplasm. The catalysed reaction is 3-methyl-2-oxobutanoate + (6R)-5,10-methylene-5,6,7,8-tetrahydrofolate + H2O = 2-dehydropantoate + (6S)-5,6,7,8-tetrahydrofolate. Its pathway is cofactor biosynthesis; (R)-pantothenate biosynthesis; (R)-pantoate from 3-methyl-2-oxobutanoate: step 1/2. Functionally, catalyzes the reversible reaction in which hydroxymethyl group from 5,10-methylenetetrahydrofolate is transferred onto alpha-ketoisovalerate to form ketopantoate. The chain is 3-methyl-2-oxobutanoate hydroxymethyltransferase from Coxiella burnetii (strain CbuG_Q212) (Coxiella burnetii (strain Q212)).